We begin with the raw amino-acid sequence, 141 residues long: Nucleoside triphosphatase NudI (141 aa).

Residues 1-141 enclose the Nudix hydrolase domain; the sequence is MRQRTIVCPL…RHTLRLKGLL (141 aa). A Nudix box motif is present at residues 38–59; sequence GGVEPGERIEEALRREIREELG.

Belongs to the Nudix hydrolase family. NudI subfamily. As to quaternary structure, monomer. Mg(2+) is required as a cofactor.

It carries out the reaction a ribonucleoside 5'-triphosphate + H2O = a ribonucleoside 5'-phosphate + diphosphate + H(+). It catalyses the reaction a 2'-deoxyribonucleoside 5'-triphosphate + H2O = a 2'-deoxyribonucleoside 5'-phosphate + diphosphate + H(+). The catalysed reaction is dUTP + H2O = dUMP + diphosphate + H(+). The enzyme catalyses dTTP + H2O = dTMP + diphosphate + H(+). It carries out the reaction dCTP + H2O = dCMP + diphosphate + H(+). Its function is as follows. Catalyzes the hydrolysis of nucleoside triphosphates, with a preference for pyrimidine deoxynucleoside triphosphates (dUTP, dTTP and dCTP). The polypeptide is Nucleoside triphosphatase NudI (Salmonella arizonae (strain ATCC BAA-731 / CDC346-86 / RSK2980)).